Reading from the N-terminus, the 226-residue chain is Deoxyribose-phosphate aldolase (226 aa).

The active-site Proton donor/acceptor is the Asp-84. Catalysis depends on Lys-146, which acts as the Schiff-base intermediate with acetaldehyde. Lys-188 acts as the Proton donor/acceptor in catalysis.

It belongs to the DeoC/FbaB aldolase family. DeoC type 1 subfamily.

It localises to the cytoplasm. It catalyses the reaction 2-deoxy-D-ribose 5-phosphate = D-glyceraldehyde 3-phosphate + acetaldehyde. The protein operates within carbohydrate degradation; 2-deoxy-D-ribose 1-phosphate degradation; D-glyceraldehyde 3-phosphate and acetaldehyde from 2-deoxy-alpha-D-ribose 1-phosphate: step 2/2. Its function is as follows. Catalyzes a reversible aldol reaction between acetaldehyde and D-glyceraldehyde 3-phosphate to generate 2-deoxy-D-ribose 5-phosphate. The protein is Deoxyribose-phosphate aldolase of Pyrobaculum arsenaticum (strain DSM 13514 / JCM 11321 / PZ6).